Reading from the N-terminus, the 770-residue chain is Arf-GAP with coiled-coil, ANK repeat and PH domain-containing protein 2 (770 aa).

A BAR domain is found at 6–226 (DFEECLKDSP…MKDLGAQLDR (221 aa)). One can recognise a PH domain in the interval 266-361 (GIVMEGYLFK…WIKAVQTSIA (96 aa)). Positions 371–392 (SEKLDKKSSPSTGSLDSGSESK) are disordered. Low complexity predominate over residues 379–388 (SPSTGSLDSG). A phosphoserine mark is found at S384 and S387. Positions 399-520 (ESALQRVQCI…KFVDKYSTLL (122 aa)) constitute an Arf-GAP domain. The segment at 414 to 437 (CCDCGLADPRWASINLGITLCIEC) adopts a C4-type zinc-finger fold. S521 carries the phosphoserine modification. A compositionally biased stretch (polar residues) spans 548-561 (TPVKSNDSGIQQCS). The segment at 548–571 (TPVKSNDSGIQQCSDDGRESLPST) is disordered. Phosphoserine occurs at positions 573 and 576. ANK repeat units follow at residues 632-661 (NQAT…NVNQ), 665-694 (QGRG…NQHA), and 698-727 (EGKD…NEEM). Y734 is modified (phosphotyrosine). S767 carries the post-translational modification Phosphoserine.

Interacts with RAB35 (GTP-bound form); the interaction is direct and probably recruits ACAP2 to membranes. Interacts with MICALL1; the interaction is indirect through RAB35.

It is found in the endosome membrane. It localises to the cell membrane. Its activity is regulated as follows. GAP activity stimulated by phosphatidylinositol 4,5-bisphosphate (PIP2) and phosphatidic acid. Functionally, GTPase-activating protein (GAP) for ADP ribosylation factor 6 (ARF6). Doesn't show GAP activity for RAB35. This Rattus norvegicus (Rat) protein is Arf-GAP with coiled-coil, ANK repeat and PH domain-containing protein 2 (Acap2).